A 345-amino-acid polypeptide reads, in one-letter code: S-adenosylmethionine:tRNA ribosyltransferase-isomerase (345 aa).

Belongs to the QueA family. Monomer.

Its subcellular location is the cytoplasm. It carries out the reaction 7-aminomethyl-7-carbaguanosine(34) in tRNA + S-adenosyl-L-methionine = epoxyqueuosine(34) in tRNA + adenine + L-methionine + 2 H(+). It functions in the pathway tRNA modification; tRNA-queuosine biosynthesis. Functionally, transfers and isomerizes the ribose moiety from AdoMet to the 7-aminomethyl group of 7-deazaguanine (preQ1-tRNA) to give epoxyqueuosine (oQ-tRNA). This chain is S-adenosylmethionine:tRNA ribosyltransferase-isomerase, found in Acidithiobacillus ferrooxidans (strain ATCC 53993 / BNL-5-31) (Leptospirillum ferrooxidans (ATCC 53993)).